A 190-amino-acid polypeptide reads, in one-letter code: Translation initiation factor IF-3 (190 aa).

This sequence belongs to the IF-3 family. As to quaternary structure, monomer.

It localises to the cytoplasm. Functionally, IF-3 binds to the 30S ribosomal subunit and shifts the equilibrium between 70S ribosomes and their 50S and 30S subunits in favor of the free subunits, thus enhancing the availability of 30S subunits on which protein synthesis initiation begins. This is Translation initiation factor IF-3 from Prochlorococcus marinus (strain MIT 9301).